Reading from the N-terminus, the 440-residue chain is Thymidine phosphorylase (440 aa).

This sequence belongs to the thymidine/pyrimidine-nucleoside phosphorylase family. In terms of assembly, homodimer.

It carries out the reaction thymidine + phosphate = 2-deoxy-alpha-D-ribose 1-phosphate + thymine. It participates in pyrimidine metabolism; dTMP biosynthesis via salvage pathway; dTMP from thymine: step 1/2. In terms of biological role, the enzymes which catalyze the reversible phosphorolysis of pyrimidine nucleosides are involved in the degradation of these compounds and in their utilization as carbon and energy sources, or in the rescue of pyrimidine bases for nucleotide synthesis. This chain is Thymidine phosphorylase, found in Serratia proteamaculans (strain 568).